A 245-amino-acid chain; its full sequence is 1-(5-phosphoribosyl)-5-[(5-phosphoribosylamino)methylideneamino] imidazole-4-carboxamide isomerase (245 aa).

Residue D8 is the Proton acceptor of the active site. Residue D129 is the Proton donor of the active site.

The protein belongs to the HisA/HisF family.

It localises to the cytoplasm. The catalysed reaction is 1-(5-phospho-beta-D-ribosyl)-5-[(5-phospho-beta-D-ribosylamino)methylideneamino]imidazole-4-carboxamide = 5-[(5-phospho-1-deoxy-D-ribulos-1-ylimino)methylamino]-1-(5-phospho-beta-D-ribosyl)imidazole-4-carboxamide. It functions in the pathway amino-acid biosynthesis; L-histidine biosynthesis; L-histidine from 5-phospho-alpha-D-ribose 1-diphosphate: step 4/9. This is 1-(5-phosphoribosyl)-5-[(5-phosphoribosylamino)methylideneamino] imidazole-4-carboxamide isomerase from Rhodopseudomonas palustris (strain BisB5).